Here is a 174-residue protein sequence, read N- to C-terminus: Co-chaperone protein HscB homolog (174 aa).

One can recognise a J domain in the interval 2–74 (NYFELFNLPV…IRRAEHMLAL (73 aa)).

The protein belongs to the HscB family. As to quaternary structure, interacts with HscA and stimulates its ATPase activity.

Co-chaperone involved in the maturation of iron-sulfur cluster-containing proteins. Seems to help targeting proteins to be folded toward HscA. In Shewanella amazonensis (strain ATCC BAA-1098 / SB2B), this protein is Co-chaperone protein HscB homolog.